We begin with the raw amino-acid sequence, 543 residues long: Chaperonin GroEL (543 aa).

Residues 29–32 (TLGP), 86–90 (DGTTT), Gly-413, 478–480 (NAA), and Asp-494 each bind ATP.

This sequence belongs to the chaperonin (HSP60) family. In terms of assembly, forms a cylinder of 14 subunits composed of two heptameric rings stacked back-to-back. Interacts with the co-chaperonin GroES.

The protein resides in the cytoplasm. It carries out the reaction ATP + H2O + a folded polypeptide = ADP + phosphate + an unfolded polypeptide.. Together with its co-chaperonin GroES, plays an essential role in assisting protein folding. The GroEL-GroES system forms a nano-cage that allows encapsulation of the non-native substrate proteins and provides a physical environment optimized to promote and accelerate protein folding. This is Chaperonin GroEL from Lactobacillus gasseri (strain ATCC 33323 / DSM 20243 / BCRC 14619 / CIP 102991 / JCM 1131 / KCTC 3163 / NCIMB 11718 / NCTC 13722 / AM63).